Consider the following 533-residue polypeptide: MSKDYQSLAKLSPFELKDELIKIASSDGNRLMLNAGRGNPNFLATTPRRAFFRLGLFAAAESELSYSYMTTVGVGGLAKIDGIEGRFERYIAENRDQEGVRFLGKSLSYVRDQLGLDPAAFLHEMVDGILGCNYPVPPRMLNISEKIVRQYIIREMGADAIPSESVNLFAVEGGTAAMAYIFESLKLNGLLKAGDKVAIGMPVFTPYIEIPELAQYALEEVAINADPSLNWQYPDSELDKLKDPAIKIFFCVNPSNPPSVKMDQRSLERVRNIVAEHRPDLMILTDDVYGTFADDFQSLFAICPENTLLVYSFSKYFGATGWRLGVVAAHQQNVFDLALDKLQESEKVALDHRYRSLLPDVRSLKFIDRLVADSRAVALNHTAGLSTPQQVQMALFSLFALMDEADEYKHTLKQLIRRRETTLYRELGMPPLRDENAVDYYTLIDLQDVTAKLYGEAFSEWAVKQSSTGDMLFRIADETGIVLLPGRGFGSNRPSGRASLANLNEYEYAAIGRALRKMADELYAEYSGQAQNL.

L-aspartate-binding residues include glycine 115 and asparagine 256. Lysine 315 carries the N6-(pyridoxal phosphate)lysine modification. Arginine 497 serves as a coordination point for L-aspartate.

It belongs to the class-I pyridoxal-phosphate-dependent aminotransferase family. Homododecamer. Pyridoxal 5'-phosphate is required as a cofactor.

The enzyme catalyses L-aspartate + H(+) = L-alanine + CO2. It catalyses the reaction L-aspartate + 2-oxoglutarate = oxaloacetate + L-glutamate. Bifunctional enzyme that has both L-aspartate decarboxylase and transaminase activity. In Comamonas testosteroni (Pseudomonas testosteroni), this protein is Bifunctional aspartate aminotransferase and L-aspartate beta-decarboxylase.